A 147-amino-acid polypeptide reads, in one-letter code: Large ribosomal subunit protein uL15 (147 aa).

Over residues 1 to 20 the composition is skewed to basic and acidic residues; it reads MTMHLNDLKPADGARTERTR. The segment at 1 to 64 is disordered; it reads MTMHLNDLKP…GGQTPMQRRL (64 aa). The segment covering 23–33 has biased composition (gly residues); sequence RGIGSGLGKTC. Residues 34–47 are compositionally biased toward basic residues; sequence GRGHKGSFARKGGG.

Belongs to the universal ribosomal protein uL15 family. Part of the 50S ribosomal subunit.

Functionally, binds to the 23S rRNA. The chain is Large ribosomal subunit protein uL15 from Xanthomonas campestris pv. campestris (strain 8004).